The chain runs to 342 residues: MLDERAKTLLKTLVERYIADGQPVGSRTLSRASGLELSPATIRNVMADLEELGLIASPHTSAGRIPTARGYRLFVDTMLTARPLDMARSEPGLAAAQEQLQPDQPQRVITHAAQVLSNLSQFVGVVTAPRKAGVFHHIEFMRLGERRVLVILVSPDGDVQNRVIFTARDHSPAELVEASNFINAHYSGLSIEAVRERLKTEIDALRGEIALLMQAAVQFGSEAADGENEQVVVSGERNLLTMQDFSSDMGSLRKLFDLFEQKTQLMRLLDVSSRAEGVRIYIGGESQIVPFEELSVVSAPYEVDGKIVGTLGVIGPTRMAYDRMIQIVDITSRLVTQALSQK.

It belongs to the HrcA family.

Functionally, negative regulator of class I heat shock genes (grpE-dnaK-dnaJ and groELS operons). Prevents heat-shock induction of these operons. The chain is Heat-inducible transcription repressor HrcA from Methylibium petroleiphilum (strain ATCC BAA-1232 / LMG 22953 / PM1).